We begin with the raw amino-acid sequence, 609 residues long: Autophagy-related protein 22-1 (609 aa).

Transmembrane regions (helical) follow at residues 95–115 (YYAGGPTVVSQCVVYIFGVEI), 117–137 (TASFAMYTFSVSVFIQAILII), 151–171 (LLLVAFAVIGSVSTMLFLGVV), and 176–196 (MVGAVIAIIANTCFGASFVLL). The tract at residues 214-238 (AREPPPALDGSRAQEGHSDTTNDID) is disordered. Basic and acidic residues predominate over residues 225–238 (RAQEGHSDTTNDID). N-linked (GlcNAc...) asparagine glycosylation is present at asparagine 244. A helical membrane pass occupies residues 287-307 (IGIGYIGAIILQIVCILVVIA). The N-linked (GlcNAc...) asparagine glycan is linked to asparagine 309. A run of 3 helical transmembrane segments spans residues 317–337 (LVLFLIGLWWFIFTIPAALWL), 381–401 (ILLFLAAWLLLSDGIATVSGT), and 415–435 (AALGLINVIAMVAGVLGAFSW). Asparagine 443 carries an N-linked (GlcNAc...) asparagine glycan. 4 helical membrane-spanning segments follow: residues 450 to 470 (IIACILLFELVPLYGLLGFIP), 487 to 509 (FPLGIVYGLVMGGLSSYCRSFFG), 522 to 542 (ALYAITDKGSSIFGPAIVGII), and 552 to 572 (AFVFLAILIFLPLPLMLLVDV).

This sequence belongs to the ATG22 family.

It localises to the vacuole membrane. In terms of biological role, vacuolar effluxer which mediate the efflux of amino acids resulting from autophagic degradation. The release of autophagic amino acids allows the maintenance of protein synthesis and viability during nitrogen starvation. This Neosartorya fischeri (strain ATCC 1020 / DSM 3700 / CBS 544.65 / FGSC A1164 / JCM 1740 / NRRL 181 / WB 181) (Aspergillus fischerianus) protein is Autophagy-related protein 22-1 (atg22-1).